The sequence spans 149 residues: Large ribosomal subunit protein bL9 (149 aa).

This sequence belongs to the bacterial ribosomal protein bL9 family.

In terms of biological role, binds to the 23S rRNA. The chain is Large ribosomal subunit protein bL9 (rplI) from Geobacillus stearothermophilus (Bacillus stearothermophilus).